Consider the following 706-residue polypeptide: Termination factor NPH-I homolog (706 aa).

The 166-residue stretch at Ile-62–Arg-227 folds into the Helicase ATP-binding domain. His-75 to Thr-82 contributes to the ATP binding site. A DEAH box motif is present at residues Asp-168 to His-171. The Helicase C-terminal domain maps to Lys-378 to Leu-599.

The protein belongs to the DEAD box helicase family. DEAH subfamily. In terms of assembly, part of the viral DNA-directed RNA polymerase that consists of 8 polII-like subunits (RPB1, RPB2, RPB3, RPB5, RPB6, RPB7, RPB9, RPB10), a capping enzyme and a termination factor.

The protein resides in the virion. Its function is as follows. Putative DNA-dependent ATPase required for providing the needed energy to achieve the termination of early transcripts. The sequence is that of Termination factor NPH-I homolog from African swine fever virus (isolate Pig/Kenya/KEN-50/1950) (ASFV).